The primary structure comprises 294 residues: N-acetylmuramic acid 6-phosphate etherase (294 aa).

Positions 54 to 217 constitute an SIS domain; the sequence is VIQSFEEEGR…STASMIGVGK (164 aa). E82 (proton donor) is an active-site residue. Residue E113 is part of the active site.

Belongs to the GCKR-like family. MurNAc-6-P etherase subfamily. In terms of assembly, homodimer.

It carries out the reaction N-acetyl-D-muramate 6-phosphate + H2O = N-acetyl-D-glucosamine 6-phosphate + (R)-lactate. It participates in amino-sugar metabolism; N-acetylmuramate degradation. Functionally, specifically catalyzes the cleavage of the D-lactyl ether substituent of MurNAc 6-phosphate, producing GlcNAc 6-phosphate and D-lactate. The polypeptide is N-acetylmuramic acid 6-phosphate etherase (Bacillus cereus (strain ZK / E33L)).